The sequence spans 311 residues: Ribosomal RNA small subunit methyltransferase A (311 aa).

S-adenosyl-L-methionine-binding residues include Asn29, Val31, Gly56, Glu77, Asp107, and Asn126.

This sequence belongs to the class I-like SAM-binding methyltransferase superfamily. rRNA adenine N(6)-methyltransferase family. RsmA subfamily.

The protein localises to the cytoplasm. It carries out the reaction adenosine(1518)/adenosine(1519) in 16S rRNA + 4 S-adenosyl-L-methionine = N(6)-dimethyladenosine(1518)/N(6)-dimethyladenosine(1519) in 16S rRNA + 4 S-adenosyl-L-homocysteine + 4 H(+). Its function is as follows. Specifically dimethylates two adjacent adenosines (A1518 and A1519) in the loop of a conserved hairpin near the 3'-end of 16S rRNA in the 30S particle. May play a critical role in biogenesis of 30S subunits. This chain is Ribosomal RNA small subunit methyltransferase A, found in Mycolicibacterium vanbaalenii (strain DSM 7251 / JCM 13017 / BCRC 16820 / KCTC 9966 / NRRL B-24157 / PYR-1) (Mycobacterium vanbaalenii).